Here is a 352-residue protein sequence, read N- to C-terminus: tRNA N6-adenosine threonylcarbamoyltransferase (352 aa).

2 residues coordinate Fe cation: H115 and H119. Substrate-binding positions include 138-142 (LVSGG), D171, G184, and N277. Residue D305 participates in Fe cation binding.

The protein belongs to the KAE1 / TsaD family. Requires Fe(2+) as cofactor.

The protein resides in the cytoplasm. The enzyme catalyses L-threonylcarbamoyladenylate + adenosine(37) in tRNA = N(6)-L-threonylcarbamoyladenosine(37) in tRNA + AMP + H(+). Its function is as follows. Required for the formation of a threonylcarbamoyl group on adenosine at position 37 (t(6)A37) in tRNAs that read codons beginning with adenine. Is involved in the transfer of the threonylcarbamoyl moiety of threonylcarbamoyl-AMP (TC-AMP) to the N6 group of A37, together with TsaE and TsaB. TsaD likely plays a direct catalytic role in this reaction. This is tRNA N6-adenosine threonylcarbamoyltransferase from Variovorax paradoxus (strain S110).